Reading from the N-terminus, the 142-residue chain is Large ribosomal subunit protein uL13 (142 aa).

This sequence belongs to the universal ribosomal protein uL13 family. Part of the 50S ribosomal subunit.

In terms of biological role, this protein is one of the early assembly proteins of the 50S ribosomal subunit, although it is not seen to bind rRNA by itself. It is important during the early stages of 50S assembly. This chain is Large ribosomal subunit protein uL13, found in Thermococcus kodakarensis (strain ATCC BAA-918 / JCM 12380 / KOD1) (Pyrococcus kodakaraensis (strain KOD1)).